Reading from the N-terminus, the 224-residue chain is Non-structural protein V (224 aa).

Positions 55–65 (KNIQYPTTSHQ) are enriched in polar residues. Disordered regions lie at residues 55-90 (KNIQYPTTSHQGSKSKGRGSGARPIIVSSSEGGTGG) and 145-172 (TSTPVTEFKRGAGSGCSRPDNPRGGHRR). Histidine 170, cysteine 189, cysteine 193, cysteine 205, cysteine 207, cysteine 210, cysteine 214, and cysteine 217 together coordinate Zn(2+).

It belongs to the paramyxoviruses V protein family. As to quaternary structure, interacts with host IFIH1/MDA5 and DHX58/LGP2. Forms with host DDB1, CUL4A, STAT1, STAT2 and STAT3 the mumps virus V-dependent complex (VDC).

Its subcellular location is the virion. The protein localises to the host cytoplasm. Functionally, plays an essential role in the inhibition of host immune response. Prevents the establishment of cellular antiviral state by blocking interferon-alpha/beta (IFN-alpha/beta) production and signaling pathway. Interacts with host IFIH1/MDA5 and DHX58/LGP2 to inhibit the transduction pathway involved in the activation of IFN-beta promoter, thus protecting the virus against cell antiviral state. Blocks the type I and II interferon signaling pathways by interacting with host STAT1, STAT2 and STAT3, and mediating their ubiquitination and subsequent proteasomal degradation. This is Non-structural protein V from Mumps virus genotype B (strain Miyahara vaccine) (MuV).